A 374-amino-acid polypeptide reads, in one-letter code: Pulmonary surfactant-associated protein D (374 aa).

The signal sequence occupies residues 1–19 (MLHFLSMLVLLVQPLGDLG). 2 positions are modified to S-nitrosocysteine: Cys-34 and Cys-39. Residues 40–221 (SPTENGLPGR…RGIKGESGLP (182 aa)) form a disordered region. Positions 45–221 (GLPGRDGRDG…RGIKGESGLP (177 aa)) constitute a Collagen-like domain. Over residues 49–64 (RDGRDGREGPRGEKGD) the composition is skewed to basic and acidic residues. A Hydroxyproline modification is found at Pro-77. At Lys-86 the chain carries 5-hydroxylysine. A glycan (N-linked (GlcNAc...) asparagine) is linked at Asn-89. Pro-95 is subject to Hydroxyproline. Position 98 is a 5-hydroxylysine (Lys-98). The residue at position 109 (Ser-109) is a Phosphoserine. 2 stretches are compositionally biased toward low complexity: residues 137–163 (KGEA…PAGP) and 170–200 (PGEQ…RGPP). Pro-170 and Pro-176 each carry hydroxyproline. The span at 203–215 (KGDRGAPGDRGIK) shows a compositional bias: basic and acidic residues. Residues 222–253 (DSAALRQQMEALNGKLQRLEAAFSRYKKAALF) are a coiled coil. The C-type lectin domain maps to 259 to 374 (VGDKIFRAAN…GEQRLVICEF (116 aa)). 2 disulfide bridges follow: Cys-280–Cys-372 and Cys-350–Cys-364.

This sequence belongs to the SFTPD family. In terms of assembly, oligomeric complex of 4 set of homotrimers. In terms of processing, S-nitrosylation at Cys-34 and Cys-39 alters the quaternary structure which results in a pro-inflammatory chemoattractive signaling activity with macrophages.

It localises to the secreted. It is found in the extracellular space. The protein localises to the extracellular matrix. Its subcellular location is the surface film. In terms of biological role, contributes to the lung's defense against inhaled microorganisms, organic antigens and toxins. Interacts with compounds such as bacterial lipopolysaccharides, oligosaccharides and fatty acids and modulates leukocyte action in immune response. May participate in the extracellular reorganization or turnover of pulmonary surfactant. Binds strongly maltose residues and to a lesser extent other alpha-glucosyl moieties. This is Pulmonary surfactant-associated protein D (Sftpd) from Rattus norvegicus (Rat).